The sequence spans 465 residues: FAD-dependent oxidoreductase pigF (465 aa).

The N-terminal stretch at 1–17 (MMLLTLLILSSVGLAAA) is a signal peptide. N-linked (GlcNAc...) asparagine glycosylation is found at Asn-95, Asn-138, Asn-260, and Asn-327. Residue Asp-444 is the site of GPI-anchor amidated aspartate attachment. Positions 445–465 (SASGIWNLTNAVVLPGLLTGL) are cleaved as a propeptide — removed in mature form. N-linked (GlcNAc...) asparagine glycosylation occurs at Asn-451.

It belongs to the beta-cyclopiazonate dehydrogenase family. The cofactor is FAD.

It localises to the cell membrane. It functions in the pathway secondary metabolite biosynthesis. Functionally, FAD-dependent oxidoreductase; part of the gene cluster that mediates the biosynthesis of azaphilone pigments (MonAzPs), a complex mixture of compounds with a common azaphilone skeleton very widely used as food colorants. Within the pathway, pigF desaturates C6(7) to afford the orange and red pigments from yellow pigments. The first step of the pathway is performed by the nrPKS pigA that forms the hexaketide precursor from successive condensations of five malonyl-CoA units, with a simple acetyl-CoA starter unit. The role of esterase pigG is not clear, but it may play at most a supplementary role in the formation of the benzaldehyde produced by the pigA nrPKS. This very reactive benzaldehyde is intercepted by the pigC ketoreductase that to provide the first stable enzyme-free MonAzPs intermediate, 6-(4-hydroxy-2-oxopentyl)-3-methyl-2,4-dioxocyclohexane carbaldehyde, also known as M7PKS-1. The FAD-dependent monooxygenase pigN hydroxylates M7PKS-1 at C-4, which triggers the formation of the pyran ring. PigJ, pigK and pigD are involved in the acetylation of the pyran ring. PigJ and pigK form the two subunits of a dedicated fungal FAS that produces the side chain fatty acyl moiety of MonAzPs and pigD transfers the fatty acyl chain to the C-4 alcohol. PigM and pigO are involved in the elimination of the omega-1 alcohol. PigM acts as an O-acetyltransferase that synthesizes the putative O-11 acetyl intermediate whereas pigO eliminates acetic acid to yield an intermediate with a C10(11) double bond. The dehydration of the C-11 alcohol followed by the reduction of the C6(7) double bond by the NAD(P)H-dependent oxidoreductase pigE increases the electrophilicity of the C-5 ketone of the resulting acyl benzopyran. This in turn sets up the C-5 ketone for an intramolecular Knoevenagel aldol condensation with the C-20 enol of the side chain. This condensation affords the characteristic linear tricyclic carbon skeletons of the yellow pigments that serve as the common precursors for the classical yellow pigments monascin and ankaflavin, orange pigments rubopunctatin and monascorubrin, and red pigments ribropunctamine and monascorubramine. The FAD-dependent oxidoreductase pigF is especially invoved in the biosynthesis of orange and red pigments via desaturation of C6(7). This Monascus ruber (Mold) protein is FAD-dependent oxidoreductase pigF.